The sequence spans 418 residues: Trans-acting enoyl reductase (418 aa).

It belongs to the saccharopine dehydrogenase family. Enoyl reductase subfamily.

In terms of biological role, involved in the reduction of the double bond between C-4 and C-5 during phthiocerol dimycocerosates (DIM A) and glycosylated phenolphthiocerol dimycocerosates (PGL) biosynthesis. The protein is Trans-acting enoyl reductase of Mycobacterium tuberculosis (strain ATCC 25177 / H37Ra).